Here is a 220-residue protein sequence, read N- to C-terminus: UPF0319 protein YccT (220 aa).

Residues 1 to 20 (MKTGALATFLALCLPVTVFA) form the signal peptide.

The protein belongs to the UPF0319 family.

In Salmonella enteritidis PT4 (strain P125109), this protein is UPF0319 protein YccT.